The following is a 164-amino-acid chain: MSQSICSTGLRWLWLVVIVLIIDLGSKYLILQNFALGDTVPLFPSLNLHASAYYGAAFSFLADSGGWQRWFFAGIAIGISVLLAVMMYRSKATQKLNNIAYALIIGGALGNLFDRLWHGFVVDMIDFYVGDWHFATFNLADTAICVGAALIVLEGFLPSKAKKQ.

A run of 4 helical transmembrane segments spans residues 12–32, 42–62, 70–90, and 102–122; these read WLWLVVIVLIIDLGSKYLILQ, LFPSLNLHASAYYGAAFSFLA, WFFAGIAIGISVLLAVMMYRS, and ALIIGGALGNLFDRLWHGFVV. Residues Asp123 and Asp141 contribute to the active site. The chain crosses the membrane as a helical span at residues 137 to 157; it reads FNLADTAICVGAALIVLEGFL.

Belongs to the peptidase A8 family.

It is found in the cell inner membrane. It carries out the reaction Release of signal peptides from bacterial membrane prolipoproteins. Hydrolyzes -Xaa-Yaa-Zaa-|-(S,diacylglyceryl)Cys-, in which Xaa is hydrophobic (preferably Leu), and Yaa (Ala or Ser) and Zaa (Gly or Ala) have small, neutral side chains.. Its pathway is protein modification; lipoprotein biosynthesis (signal peptide cleavage). Its function is as follows. This protein specifically catalyzes the removal of signal peptides from prolipoproteins. This is Lipoprotein signal peptidase from Shigella flexneri serotype 5b (strain 8401).